A 101-amino-acid chain; its full sequence is Putative regulatory protein PrgT (101 aa).

Its function is as follows. Might be involved in the expression of prgA, but is not required for activation of the expression of prgB. In Enterococcus faecalis (strain ATCC 47077 / OG1RF), this protein is Putative regulatory protein PrgT (prgT).